Here is a 316-residue protein sequence, read N- to C-terminus: Transaldolase A (316 aa).

Lys-131 (schiff-base intermediate with substrate) is an active-site residue.

Belongs to the transaldolase family. Type 1 subfamily. In terms of assembly, homodimer.

The protein resides in the cytoplasm. The enzyme catalyses D-sedoheptulose 7-phosphate + D-glyceraldehyde 3-phosphate = D-erythrose 4-phosphate + beta-D-fructose 6-phosphate. Its pathway is carbohydrate degradation; pentose phosphate pathway; D-glyceraldehyde 3-phosphate and beta-D-fructose 6-phosphate from D-ribose 5-phosphate and D-xylulose 5-phosphate (non-oxidative stage): step 2/3. Functionally, transaldolase is important for the balance of metabolites in the pentose-phosphate pathway. The chain is Transaldolase A from Salmonella typhimurium (strain LT2 / SGSC1412 / ATCC 700720).